The chain runs to 363 residues: Phospho-N-acetylmuramoyl-pentapeptide-transferase (363 aa).

The next 10 helical transmembrane spans lie at 3–23, 48–68, 83–103, 121–141, 159–179, 192–212, 234–254, 261–281, 286–306, and 340–360; these read QILFAGVIGLFLTLVGTPLLI, GTPTMGGIAFILATVAAYFLA, PTFSGLLVLGLMVGMGLVGFL, AKMIGQLTVGIAFAVLSLQFA, FGWTIGPVLFVVWALFMILAM, LATGASVLVFGAYTFIGVWQF, PLDLAVVASALMGSCLGFLWW, IFMGDTGSLALGGVLAGLAIC, LLMAILGGLFVLITMSVVIQV, and FWIIQGICVIVGLGLFYAGWA.

The protein belongs to the glycosyltransferase 4 family. MraY subfamily. Requires Mg(2+) as cofactor.

It localises to the cell membrane. The catalysed reaction is UDP-N-acetyl-alpha-D-muramoyl-L-alanyl-gamma-D-glutamyl-meso-2,6-diaminopimeloyl-D-alanyl-D-alanine + di-trans,octa-cis-undecaprenyl phosphate = di-trans,octa-cis-undecaprenyl diphospho-N-acetyl-alpha-D-muramoyl-L-alanyl-D-glutamyl-meso-2,6-diaminopimeloyl-D-alanyl-D-alanine + UMP. It participates in cell wall biogenesis; peptidoglycan biosynthesis. Its function is as follows. Catalyzes the initial step of the lipid cycle reactions in the biosynthesis of the cell wall peptidoglycan: transfers peptidoglycan precursor phospho-MurNAc-pentapeptide from UDP-MurNAc-pentapeptide onto the lipid carrier undecaprenyl phosphate, yielding undecaprenyl-pyrophosphoryl-MurNAc-pentapeptide, known as lipid I. This chain is Phospho-N-acetylmuramoyl-pentapeptide-transferase, found in Streptomyces coelicolor (strain ATCC BAA-471 / A3(2) / M145).